A 387-amino-acid chain; its full sequence is MAAAAAAAAICGEDETAARVGCTGEWAGGIERVDLGERKEAVAAAGAGKRSVYLMDCAPVWGCASTRGRSAEMEDASAAVPRFADVPVRLLASRRDLDALGLDADALRLPAHLFGVFDGHGGAEVANYCRERIHVVLSEELKRLGKNLGEMGEVDMKEHWDDVFTKCFQRVDDEVSGRVTRVVNGGGEVRSEPVTAENVGSTAVVALVCSSHVVVANCGDSRIVLCRGKEPVALSIDHKPDRKDERARIEAQGGKVIQWNGYRVSGILAMSRSIGDRYLKPFVIPKPEVMVVPRAKDDDCLILASDGLWDVVSNEEACKVARRQILLWHKNNGAASPLSDEGEGSTDPAAQAAADYLMRLALKKGSEDNITVIVVDLKPRKKLKNIS.

Positions 60–377 (VWGCASTRGR…DNITVIVVDL (318 aa)) constitute a PPM-type phosphatase domain. Mn(2+)-binding residues include aspartate 118 and glycine 119. A Modulates binding affinity to PYR/PYL/RCAR abscisic acid intracellular receptors motif is present at residues 264-268 (VSGIL). The Mn(2+) site is built by aspartate 306 and aspartate 368.

It belongs to the PP2C family. Interacts with PYL3, PYL5, PYL9 and PYL10. Binding to PYL3, PYL5, PYL9 and PYL10 is dependent on the presence of abscisic acid (ABA). Interacts with SAPK10. It depends on Mg(2+) as a cofactor. Requires Mn(2+) as cofactor.

It carries out the reaction O-phospho-L-seryl-[protein] + H2O = L-seryl-[protein] + phosphate. It catalyses the reaction O-phospho-L-threonyl-[protein] + H2O = L-threonyl-[protein] + phosphate. Its function is as follows. Protein phosphatase involved in abscisic acid (ABA) signaling. Together with PYL3 and SAPK10, may form an ABA signaling module involved in stress response. The chain is Protein phosphatase 2C 50 from Oryza sativa subsp. japonica (Rice).